Reading from the N-terminus, the 38-residue chain is Photosystem II reaction center protein L (38 aa).

Residues 17–37 (SLFLGRLLIFVLGILFSSYIF) form a helical membrane-spanning segment.

The protein belongs to the PsbL family. PSII is composed of 1 copy each of membrane proteins PsbA, PsbB, PsbC, PsbD, PsbE, PsbF, PsbH, PsbI, PsbJ, PsbK, PsbL, PsbM, PsbT, PsbX, PsbY, PsbZ, Psb30/Ycf12, peripheral proteins PsbO, CyanoQ (PsbQ), PsbU, PsbV and a large number of cofactors. It forms dimeric complexes.

The protein localises to the cellular thylakoid membrane. Functionally, one of the components of the core complex of photosystem II (PSII). PSII is a light-driven water:plastoquinone oxidoreductase that uses light energy to abstract electrons from H(2)O, generating O(2) and a proton gradient subsequently used for ATP formation. It consists of a core antenna complex that captures photons, and an electron transfer chain that converts photonic excitation into a charge separation. This subunit is found at the monomer-monomer interface and is required for correct PSII assembly and/or dimerization. This chain is Photosystem II reaction center protein L, found in Prochlorothrix hollandica.